The chain runs to 449 residues: UDP-N-acetylmuramoylalanine--D-glutamate ligase (449 aa).

Residue 118 to 124 (GSNGKTT) coordinates ATP.

Belongs to the MurCDEF family.

The protein localises to the cytoplasm. The catalysed reaction is UDP-N-acetyl-alpha-D-muramoyl-L-alanine + D-glutamate + ATP = UDP-N-acetyl-alpha-D-muramoyl-L-alanyl-D-glutamate + ADP + phosphate + H(+). Its pathway is cell wall biogenesis; peptidoglycan biosynthesis. Functionally, cell wall formation. Catalyzes the addition of glutamate to the nucleotide precursor UDP-N-acetylmuramoyl-L-alanine (UMA). The sequence is that of UDP-N-acetylmuramoylalanine--D-glutamate ligase from Oceanobacillus iheyensis (strain DSM 14371 / CIP 107618 / JCM 11309 / KCTC 3954 / HTE831).